Reading from the N-terminus, the 160-residue chain is Endoribonuclease YbeY (160 aa).

Zn(2+)-binding residues include histidine 123, histidine 127, and histidine 133.

The protein belongs to the endoribonuclease YbeY family. Zn(2+) is required as a cofactor.

Its subcellular location is the cytoplasm. Single strand-specific metallo-endoribonuclease involved in late-stage 70S ribosome quality control and in maturation of the 3' terminus of the 16S rRNA. This is Endoribonuclease YbeY from Roseiflexus sp. (strain RS-1).